A 116-amino-acid polypeptide reads, in one-letter code: Dynein light chain Tctex-type 3 (116 aa).

Tyrosine 4 is modified (3'-nitrotyrosine).

It belongs to the dynein light chain Tctex-type family. In terms of assembly, homodimer. The cytoplasmic dynein 1 complex consists of two catalytic heavy chains (HCs) and a number of non-catalytic subunits presented by intermediate chains (ICs), light intermediate chains (LICs) and light chains (LCs); the composition seems to vary in respect to the IC, LIC and LC composition. The heavy chain homodimer serves as a scaffold for the probable homodimeric assembly of the respective non-catalytic subunits. The ICs and LICs bind directly to the HC dimer and the LCs assemble on the IC dimer. DYNLT1 and DYNLT3 compete for association with dynein IC (DYNC1I1 or DYNC1I2). Self-associates. Interacts with DYNC1I1 and DYNC1I2. Interacts with BUB3. Interacts with SATB1 in nucleus to form complex with matrix attachment regions (MARs) of DNA.

The protein localises to the nucleus. The protein resides in the cytoplasm. It localises to the cytoskeleton. Its subcellular location is the chromosome. It is found in the centromere. The protein localises to the kinetochore. Its function is as follows. Acts as one of several non-catalytic accessory components of the cytoplasmic dynein 1 complex that are thought to be involved in linking dynein to cargos and to adapter proteins that regulate dynein function. Cytoplasmic dynein 1 acts as a motor for the intracellular retrograde motility of vesicles and organelles along microtubules. Probably binds BUB3 as part of transport cargo. Required for the efficient progression through mitosis. This is Dynein light chain Tctex-type 3 (DYNLT3) from Ovis aries (Sheep).